A 254-amino-acid polypeptide reads, in one-letter code: 3-deoxy-manno-octulosonate cytidylyltransferase (254 aa).

This sequence belongs to the KdsB family.

The protein localises to the cytoplasm. It catalyses the reaction 3-deoxy-alpha-D-manno-oct-2-ulosonate + CTP = CMP-3-deoxy-beta-D-manno-octulosonate + diphosphate. It participates in nucleotide-sugar biosynthesis; CMP-3-deoxy-D-manno-octulosonate biosynthesis; CMP-3-deoxy-D-manno-octulosonate from 3-deoxy-D-manno-octulosonate and CTP: step 1/1. It functions in the pathway bacterial outer membrane biogenesis; lipopolysaccharide biosynthesis. In terms of biological role, activates KDO (a required 8-carbon sugar) for incorporation into bacterial lipopolysaccharide in Gram-negative bacteria. In Pseudomonas fluorescens (strain SBW25), this protein is 3-deoxy-manno-octulosonate cytidylyltransferase.